The sequence spans 182 residues: UPF0397 protein BCA_2731 (182 aa).

Transmembrane regions (helical) follow at residues 9-29 (VVAI…GFSI), 40-60 (AILT…IGLI), 71-91 (WGIW…MGLI), 114-134 (ITGL…DIIV), and 142-162 (IVIQ…VLGL).

This sequence belongs to the UPF0397 family.

The protein resides in the cell membrane. The sequence is that of UPF0397 protein BCA_2731 from Bacillus cereus (strain 03BB102).